Here is a 475-residue protein sequence, read N- to C-terminus: Beta-amyrin 6-beta-monooxygenase (475 aa).

Residues Leu6–Phe22 form a helical membrane-spanning segment. Cys423 serves as a coordination point for heme.

It belongs to the cytochrome P450 family. The cofactor is heme. Specifically expressed in roots.

The protein localises to the membrane. The catalysed reaction is beta-amyrin + reduced [NADPH--hemoprotein reductase] + O2 = daturadiol + oxidized [NADPH--hemoprotein reductase] + H2O + H(+). Its function is as follows. Catalyzes the C-6 beta-hydroxylation of beta-amyrin to form daturadiol. Catalyzes the C-6 beta-hydroxylation of alpha-amyrin to form 6-beta-hydroxy-alpha-amyrin. The protein is Beta-amyrin 6-beta-monooxygenase of Solanum lycopersicum (Tomato).